Reading from the N-terminus, the 239-residue chain is Orotidine 5'-phosphate decarboxylase (239 aa).

Residues Asp-15, Lys-37, 64 to 73, Thr-126, Arg-187, Gln-196, Gly-216, and Arg-217 contribute to the substrate site; that span reads DLKYHDIPNT. The active-site Proton donor is the Lys-66.

Belongs to the OMP decarboxylase family. Type 1 subfamily. In terms of assembly, homodimer.

The catalysed reaction is orotidine 5'-phosphate + H(+) = UMP + CO2. The protein operates within pyrimidine metabolism; UMP biosynthesis via de novo pathway; UMP from orotate: step 2/2. Functionally, catalyzes the decarboxylation of orotidine 5'-monophosphate (OMP) to uridine 5'-monophosphate (UMP). The chain is Orotidine 5'-phosphate decarboxylase from Geotalea daltonii (strain DSM 22248 / JCM 15807 / FRC-32) (Geobacter daltonii).